Consider the following 82-residue polypeptide: Exodeoxyribonuclease 7 small subunit (82 aa).

It belongs to the XseB family. In terms of assembly, heterooligomer composed of large and small subunits.

Its subcellular location is the cytoplasm. The enzyme catalyses Exonucleolytic cleavage in either 5'- to 3'- or 3'- to 5'-direction to yield nucleoside 5'-phosphates.. In terms of biological role, bidirectionally degrades single-stranded DNA into large acid-insoluble oligonucleotides, which are then degraded further into small acid-soluble oligonucleotides. This is Exodeoxyribonuclease 7 small subunit from Mycobacterium avium (strain 104).